A 171-amino-acid chain; its full sequence is Small ribosomal subunit protein uS5 (171 aa).

Residues 12-75 (LKEKLISVNR…EKARRNMIQV (64 aa)) enclose the S5 DRBM domain.

Belongs to the universal ribosomal protein uS5 family. Part of the 30S ribosomal subunit. Contacts proteins S4 and S8.

With S4 and S12 plays an important role in translational accuracy. Its function is as follows. Located at the back of the 30S subunit body where it stabilizes the conformation of the head with respect to the body. The protein is Small ribosomal subunit protein uS5 of Buchnera aphidicola subsp. Baizongia pistaciae (strain Bp).